Here is a 313-residue protein sequence, read N- to C-terminus: MMENYKHTTVLLDEAVNGLNIRPDGIYIDGTFGRGGHSRLILSQLGEEGRLLAIDRDPQAIAVAKTIDDPRFSIIHGPFSALGEYVAERDLIGKIDGILLDLGVSSPQLDDAERGFSFMRDGPLDMRMDPTCGQSAAEWLQTAEEADIAWVLKTYGEERFAKRIARAIVERNREQPMTRTKELAEVVAAATPVKDKFKHPATRTFQAVRIWVNSELEEIEQALKSSLNVLAPGGRLSIISFHSLEDRIVKRFMRENSRGPQVPAGLPMTEEQLKKLGGRQLRALGKLMPGEEEVAENPRARSSVLRIAERTNV.

S-adenosyl-L-methionine is bound by residues 35-37 (GGH), Asp-55, Phe-79, Asp-101, and Gln-108.

Belongs to the methyltransferase superfamily. RsmH family.

Its subcellular location is the cytoplasm. The enzyme catalyses cytidine(1402) in 16S rRNA + S-adenosyl-L-methionine = N(4)-methylcytidine(1402) in 16S rRNA + S-adenosyl-L-homocysteine + H(+). Its function is as follows. Specifically methylates the N4 position of cytidine in position 1402 (C1402) of 16S rRNA. The chain is Ribosomal RNA small subunit methyltransferase H from Shigella dysenteriae serotype 1 (strain Sd197).